The following is a 332-amino-acid chain: Flotillin-like protein FloA (332 aa).

Helical transmembrane passes span 6 to 26 and 28 to 48; these read LGYLILTFVVLLLLVLFFSFV and VGLWISAAAADVRVGIFYMIG.

The protein belongs to the flotillin-like FloA family. As to quaternary structure, homooligomerizes.

Its subcellular location is the cell membrane. It is found in the membrane raft. Its function is as follows. Found in functional membrane microdomains (FMM) that may be equivalent to eukaryotic membrane rafts. FMMs are highly dynamic and increase in number as cells age. Flotillins are thought to be important factors in membrane fluidity. The protein is Flotillin-like protein FloA of Symbiobacterium thermophilum (strain DSM 24528 / JCM 14929 / IAM 14863 / T).